The following is a 380-amino-acid chain: Cytochrome b (380 aa).

Transmembrane regions (helical) follow at residues 34–54 (FGSLLGICLVTQILTGLLLAM), 78–99 (WLIRNLHANGASLFFICIYMHI), 114–134 (WNTGIILLLTLMATAFVGYVL), and 179–199 (FFALHFLLPFLIAGLTLIHLT). Residues histidine 84 and histidine 98 each contribute to the heme b site. Histidine 183 and histidine 197 together coordinate heme b. A ubiquinone is bound at residue histidine 202. 4 helical membrane passes run 227 to 247 (SKDILGFMLLYFLLTTLALFS), 289 to 309 (LGGVLALAASILILFLSPFLH), 321 to 341 (LSQMLFWLLVTNLLILTWIGS), and 348 to 368 (FIIIGQLASLTYFTILLILLP).

It belongs to the cytochrome b family. In terms of assembly, the cytochrome bc1 complex contains 11 subunits: 3 respiratory subunits (MT-CYB, CYC1 and UQCRFS1), 2 core proteins (UQCRC1 and UQCRC2) and 6 low-molecular weight proteins (UQCRH/QCR6, UQCRB/QCR7, UQCRQ/QCR8, UQCR10/QCR9, UQCR11/QCR10 and a cleavage product of UQCRFS1). This cytochrome bc1 complex then forms a dimer. Heme b serves as cofactor.

It is found in the mitochondrion inner membrane. Component of the ubiquinol-cytochrome c reductase complex (complex III or cytochrome b-c1 complex) that is part of the mitochondrial respiratory chain. The b-c1 complex mediates electron transfer from ubiquinol to cytochrome c. Contributes to the generation of a proton gradient across the mitochondrial membrane that is then used for ATP synthesis. This is Cytochrome b (MT-CYB) from Caracara plancus (Southern caracara).